The sequence spans 270 residues: HTH-type transcriptional repressor DrrR1 (270 aa).

Over residues 1–11 (MESGTSRTSDT) the composition is skewed to low complexity. The segment at 1–28 (MESGTSRTSDTGGTGRAGSTETSGSGDI) is disordered. Positions 49-109 (TLTLDRVVEA…LMLDRVQRPS (61 aa)) constitute an HTH tetR-type domain. Positions 72-91 (SMRRVAAELGTGTMSLYRYV) form a DNA-binding region, H-T-H motif.

Its subcellular location is the cytoplasm. Daunorubicin and doxorubicin can induce dissociation of DrrR1 from its DNA complex. Ampicillin cannot release DrrR1 from the DNA complex at the same concentrations. In terms of biological role, transcriptional regulator that modulates the expression of the drrA2-drrB2 genes, which encode an ABC transporter involved in daunorubicin efflux, in response to intracellular daunorubicin/doxorubicin accumulation. In the absence of daunorubicin or doxorubicin, binds directly to the drrA2-drrB2 promoter region and negatively regulates expression of the genes. In the presence of daunorubicin or doxorubicin, DrrR1 dissociates from DNA, leading to the transcription of the genes. This Streptomyces coeruleorubidus protein is HTH-type transcriptional repressor DrrR1.